The sequence spans 752 residues: MTISSQEQETKKVQVTVDKNPVATSFEKWAKPGHFSRTLAKGPKTTTWIWNLHADAHDFDSHTSSLEEVSRKIFSAHFGQLAIIFLWLSGMYFHGAKFSNYIAWLSNPTAIKPSAQIVWPIVGQEILNGDVGGGFQGVQITSGFFQIWRASGITTEFELYATAIGGLFMACLMLFAGWFHYHKAAPKLEWFQNVESMMNHHLAGLLGLGCLGWAGHQIHISIPINKLLDSGVSPQELPLPHEFLVNRELVSQLYPSFSKGIIPFFTLNWNEYSDFLTFKGGLNPITGGLWLTDTAHHHLALAVLFLVAGHMYRTNWGIGHSMKEILEAHKGPFTGEGHKGIYEILTTSWHAQLAINLAMMGSLSIIVAHHMYAMPPYPYIATDYPTQLSLFTHHMWIGGFCIVGAGAHASIFMVRDYNPAQNYNNVLDRVIRHRDAIISHLNWVCIFLGFHSFGLYIHNDTMRALGRSQDMFSDTAIQLQPIFAQWIQNIHSLAPSNTSPNALATASYAFGGDVIAVNNKIAMMPINLGTADFMVHHIHAFTIHVTVLILVKGFLFSRNSRLIPDKSSLGFRFPCDGPGRGGTCQVSGWDHVFLGLFWMYNSLSIAIFHFSWKMQSDVWGSVTPAGTVSHITGGNFAQSAITINGWLRDFLWAQASQVIQSYGSALSAYGLIFLGAHFVWAFSLMFLFSGRGYWQELIESIVWAHNKVKVAPSIQPRALSITQGRAVGVAHYLLGGIGTTWAFFLARIISVG.

The next 8 membrane-spanning stretches (helical) occupy residues 73-96 (IFSA…FHGA), 159-182 (LYAT…FHYH), 198-222 (MNHH…HISI), 294-312 (TAHH…GHMY), 349-372 (WHAQ…HHMY), 388-414 (LSLF…IFMV), 436-458 (AIIS…LYIH), and 533-551 (FMVH…LILV). 2 residues coordinate [4Fe-4S] cluster: Cys575 and Cys584. The next 2 membrane-spanning stretches (helical) occupy residues 591–612 (HVFL…HFSW) and 666–688 (LSAY…MFLF). His677 lines the chlorophyll a' pocket. Residues Met685 and Tyr693 each contribute to the chlorophyll a site. Position 694 (Trp694) interacts with phylloquinone. The helical transmembrane segment at 726-746 (AVGVAHYLLGGIGTTWAFFLA) threads the bilayer.

The protein belongs to the PsaA/PsaB family. The PsaA/B heterodimer binds the P700 chlorophyll special pair and subsequent electron acceptors. PSI consists of a core antenna complex that captures photons, and an electron transfer chain that converts photonic excitation into a charge separation. The eukaryotic PSI reaction center is composed of at least 11 subunits. It depends on P700 is a chlorophyll a/chlorophyll a' dimer, A0 is one or more chlorophyll a, A1 is one or both phylloquinones and FX is a shared 4Fe-4S iron-sulfur center. as a cofactor.

It localises to the plastid. The protein localises to the chloroplast thylakoid membrane. It carries out the reaction reduced [plastocyanin] + hnu + oxidized [2Fe-2S]-[ferredoxin] = oxidized [plastocyanin] + reduced [2Fe-2S]-[ferredoxin]. In terms of biological role, psaA and PsaB bind P700, the primary electron donor of photosystem I (PSI), as well as the electron acceptors A0, A1 and FX. PSI is a plastocyanin/cytochrome c6-ferredoxin oxidoreductase, converting photonic excitation into a charge separation, which transfers an electron from the donor P700 chlorophyll pair to the spectroscopically characterized acceptors A0, A1, FX, FA and FB in turn. Oxidized P700 is reduced on the lumenal side of the thylakoid membrane by plastocyanin or cytochrome c6. This is Photosystem I P700 chlorophyll a apoprotein A1 from Gracilaria tenuistipitata var. liui (Red alga).